We begin with the raw amino-acid sequence, 89 residues long: Small ribosomal subunit protein bS16 (89 aa).

It belongs to the bacterial ribosomal protein bS16 family.

The chain is Small ribosomal subunit protein bS16 from Chloroflexus aggregans (strain MD-66 / DSM 9485).